A 341-amino-acid polypeptide reads, in one-letter code: Phenylalanine--tRNA ligase alpha subunit (341 aa).

Glu-252 contributes to the Mg(2+) binding site.

The protein belongs to the class-II aminoacyl-tRNA synthetase family. Phe-tRNA synthetase alpha subunit type 1 subfamily. As to quaternary structure, tetramer of two alpha and two beta subunits. Requires Mg(2+) as cofactor.

It localises to the cytoplasm. It carries out the reaction tRNA(Phe) + L-phenylalanine + ATP = L-phenylalanyl-tRNA(Phe) + AMP + diphosphate + H(+). The polypeptide is Phenylalanine--tRNA ligase alpha subunit (Malacoplasma penetrans (strain HF-2) (Mycoplasma penetrans)).